Reading from the N-terminus, the 73-residue chain is NADH dehydrogenase [ubiquinone] 1 beta subcomplex subunit 3-B (73 aa).

The helical transmembrane segment at 31 to 48 (ALPGLGIGVAAFCVYLVG) threads the bilayer.

Belongs to the complex I NDUFB3 subunit family. Complex I is composed of at least 49 different subunits.

It localises to the mitochondrion inner membrane. In terms of biological role, accessory subunit of the mitochondrial membrane respiratory chain NADH dehydrogenase (Complex I), that is believed not to be involved in catalysis. Complex I functions in the transfer of electrons from NADH to the respiratory chain. The immediate electron acceptor for the enzyme is believed to be ubiquinone. This is NADH dehydrogenase [ubiquinone] 1 beta subcomplex subunit 3-B from Arabidopsis thaliana (Mouse-ear cress).